The primary structure comprises 136 residues: Snaclec rhodocytin subunit alpha (136 aa).

Disulfide bonds link C5–C16, C33–C131, and C106–C123. The region spanning 12-132 (YDQHCYQAFN…CEQMHAFVCK (121 aa)) is the C-type lectin domain.

The protein belongs to the snaclec family. In terms of assembly, dimer (non-covalently linked) of heterodimers of subunits alpha and beta (disulfide-linked). As to expression, expressed by the venom gland.

The protein resides in the secreted. In terms of biological role, elicits platelet aggregation by the binding to the C-type lectin domain family 1 member B (CLEC1B/CLEC2). Binding leads to tyrosine phosphorylation in the cytoplasmic tail of CLEC1B, which promotes the binding of spleen tyrosine kinase (Syk), subsequent activation of PLC-gamma-2, and platelet activation and aggregation. Binding to GPIbalpha (GP1BA) and alpha-2/beta-1 (ITGA2/ITGB1) may also induce aggregation, but this is controversial. The polypeptide is Snaclec rhodocytin subunit alpha (Calloselasma rhodostoma (Malayan pit viper)).